A 44-amino-acid chain; its full sequence is F420-non-reducing hydrogenase vhu subunit U (44 aa).

Ni(2+)-binding residues include Sec20 and Cys23. Sec20 is a non-standard amino acid (selenocysteine). Residues 27-44 (MIVEDAEGNVVFEIVNDE) constitute a propeptide, removed in mature form.

Belongs to the [NiFe]/[NiFeSe] hydrogenase large subunit family. In terms of assembly, the F420-non-reducing hydrogenase vhu is composed of four subunits; VhuA, VhuD, VhuG and VhuU. Ni(2+) is required as a cofactor.

The protein is F420-non-reducing hydrogenase vhu subunit U (vhuU) of Methanococcus voltae.